The sequence spans 248 residues: mRNA-decapping protein OPG122 (248 aa).

Positions 45–227 (HKRVSVSAIL…IAKYALDTAK (183 aa)) constitute a Nudix hydrolase domain. Positions 126 to 147 (GIPKRGENVPECLSREIKEEVN) match the Nudix box motif. Glutamate 132 contacts Mg(2+). Residue glutamate 141 is the Nucleophile of the active site. Mn(2+) is bound at residue glutamate 145. Mg(2+) is bound at residue aspartate 167.

It belongs to the Nudix hydrolase family. The cofactor is Mg(2+). Requires Mn(2+) as cofactor.

Its subcellular location is the host mitochondrion. Functionally, decapping enzyme that remove the protective 5'-cap from both host and viral mRNAs to commit transcripts for decay by the cellular exonuclease XRN1. Preferentially targets spliced mRNAs and since all viral genes are intronless, it preferentially targets host over viral transcripts. Acceleration of the turnover of cellular transcripts promotes the shutoff of host protein synthesis and therefore diminish the magnitude of antiviral response. The sequence is that of mRNA-decapping protein OPG122 (OPG122) from Bos taurus (Bovine).